Reading from the N-terminus, the 169-residue chain is Der GTPase-activating protein YihI (169 aa).

2 disordered regions span residues 1 to 100 (MKPS…AELE) and 144 to 169 (GLSY…LRGN). Over residues 10–19 (SKGHAKARRK) the composition is skewed to basic residues. Residues 20–30 (TREELDQEARD) show a composition bias toward basic and acidic residues. The segment covering 31-40 (RKRQKKRRGH) has biased composition (basic residues). Over residues 49-58 (GNTTSGSKGQ) the composition is skewed to polar residues. A compositionally biased stretch (acidic residues) spans 147–159 (YDDDEEEEEDEKQ). A compositionally biased stretch (basic and acidic residues) spans 160–169 (EDMMRLLRGN).

This sequence belongs to the YihI family. Interacts with Der.

A GTPase-activating protein (GAP) that modifies Der/EngA GTPase function. May play a role in ribosome biogenesis. The protein is Der GTPase-activating protein YihI of Escherichia coli O6:H1 (strain CFT073 / ATCC 700928 / UPEC).